A 380-amino-acid polypeptide reads, in one-letter code: 1-deoxy-D-xylulose 5-phosphate reductoisomerase (380 aa).

T10, G11, S12, I13, G36, R37, N38, and N120 together coordinate NADPH. K121 serves as a coordination point for 1-deoxy-D-xylulose 5-phosphate. E122 contacts NADPH. A Mn(2+)-binding site is contributed by D146. 1-deoxy-D-xylulose 5-phosphate-binding residues include S147, E148, S172, and H195. E148 is a binding site for Mn(2+). Position 201 (G201) interacts with NADPH. Positions 208, 213, 214, and 217 each coordinate 1-deoxy-D-xylulose 5-phosphate. Residue E217 coordinates Mn(2+).

This sequence belongs to the DXR family. Mg(2+) serves as cofactor. Requires Mn(2+) as cofactor.

It catalyses the reaction 2-C-methyl-D-erythritol 4-phosphate + NADP(+) = 1-deoxy-D-xylulose 5-phosphate + NADPH + H(+). It functions in the pathway isoprenoid biosynthesis; isopentenyl diphosphate biosynthesis via DXP pathway; isopentenyl diphosphate from 1-deoxy-D-xylulose 5-phosphate: step 1/6. Functionally, catalyzes the NADPH-dependent rearrangement and reduction of 1-deoxy-D-xylulose-5-phosphate (DXP) to 2-C-methyl-D-erythritol 4-phosphate (MEP). This is 1-deoxy-D-xylulose 5-phosphate reductoisomerase from Listeria welshimeri serovar 6b (strain ATCC 35897 / DSM 20650 / CCUG 15529 / CIP 8149 / NCTC 11857 / SLCC 5334 / V8).